We begin with the raw amino-acid sequence, 535 residues long: Calcium-dependent protein kinase 7 (535 aa).

The tract at residues 1–29 (MGNCCGNPSSATNQSKQGKPKNKNNPFYS) is disordered. G2 is lipidated: N-myristoyl glycine. One can recognise a Protein kinase domain in the interval 59–317 (YDLGREVGRG…AAQVLEHTWI (259 aa)). ATP-binding positions include 65 to 73 (VGRGEFGIT) and K88. D183 acts as the Proton acceptor in catalysis. At S223 the chain carries Phosphoserine. The tract at residues 323–353 (APNVSLGETVKARLKQFSVMNKLKKRALRVI) is autoinhibitory domain. EF-hand domains lie at 360–395 (EEAAGIKEAFEMMDVNKRGKINLEELKYGLQKAGQQ), 396–431 (IADTDLQILMEATDVDGDGTLNYSEFVAVSVHLKKM), 432–467 (ANDEHLHKAFNFFDQNQSGYIEIDELREALNDELDN), and 468–504 (TSSEEVIAAIMQDVDTDKDGRISYEEFVAMMKAGTDW). The Ca(2+) site is built by D373, N375, K379, E384, D409, D411, D413, T415, E420, D445, N447, S449, Y451, E456, D482, D484, D486, and R488. At S490 the chain carries Phosphoserine. E493 lines the Ca(2+) pocket.

It belongs to the protein kinase superfamily. Ser/Thr protein kinase family. CDPK subfamily.

Its subcellular location is the cell membrane. The enzyme catalyses L-seryl-[protein] + ATP = O-phospho-L-seryl-[protein] + ADP + H(+). The catalysed reaction is L-threonyl-[protein] + ATP = O-phospho-L-threonyl-[protein] + ADP + H(+). With respect to regulation, activated by calcium. Autophosphorylation may play an important role in the regulation of the kinase activity. May play a role in signal transduction pathways that involve calcium as a second messenger. The sequence is that of Calcium-dependent protein kinase 7 (CPK7) from Arabidopsis thaliana (Mouse-ear cress).